A 287-amino-acid polypeptide reads, in one-letter code: Bifunctional protein FolD (287 aa).

NADP(+) is bound by residues 167–169 and threonine 192; that span reads GRS.

This sequence belongs to the tetrahydrofolate dehydrogenase/cyclohydrolase family. Homodimer.

It catalyses the reaction (6R)-5,10-methylene-5,6,7,8-tetrahydrofolate + NADP(+) = (6R)-5,10-methenyltetrahydrofolate + NADPH. It carries out the reaction (6R)-5,10-methenyltetrahydrofolate + H2O = (6R)-10-formyltetrahydrofolate + H(+). It functions in the pathway one-carbon metabolism; tetrahydrofolate interconversion. Its function is as follows. Catalyzes the oxidation of 5,10-methylenetetrahydrofolate to 5,10-methenyltetrahydrofolate and then the hydrolysis of 5,10-methenyltetrahydrofolate to 10-formyltetrahydrofolate. The sequence is that of Bifunctional protein FolD from Sorangium cellulosum (strain So ce56) (Polyangium cellulosum (strain So ce56)).